The primary structure comprises 209 residues: 3-demethoxyubiquinol 3-hydroxylase (209 aa).

Glu-58, Glu-88, His-91, Glu-140, Glu-172, and His-175 together coordinate Fe cation.

Belongs to the COQ7 family. Fe cation serves as cofactor.

Its subcellular location is the cell membrane. It catalyses the reaction a 5-methoxy-2-methyl-3-(all-trans-polyprenyl)benzene-1,4-diol + AH2 + O2 = a 3-demethylubiquinol + A + H2O. It participates in cofactor biosynthesis; ubiquinone biosynthesis. Its function is as follows. Catalyzes the hydroxylation of 2-nonaprenyl-3-methyl-6-methoxy-1,4-benzoquinol during ubiquinone biosynthesis. The protein is 3-demethoxyubiquinol 3-hydroxylase of Polynucleobacter necessarius subsp. necessarius (strain STIR1).